A 440-amino-acid polypeptide reads, in one-letter code: NADH-quinone oxidoreductase subunit H (440 aa).

The next 9 membrane-spanning stretches (helical) occupy residues 11–31, 83–103, 123–143, 164–184, 207–227, 261–281, 299–319, 331–351, and 366–386; these read VWLI…WTIF, IVFN…WSVI, VPVA…GVVL, MISY…FSGS, IAGH…ITMF, FLAE…LFLG, WWGL…FVWV, FMDL…LLVA, and VFLV…FMGG.

This sequence belongs to the complex I subunit 1 family. NDH-1 is composed of 14 different subunits. Subunits NuoA, H, J, K, L, M, N constitute the membrane sector of the complex.

The protein localises to the cell membrane. It carries out the reaction a quinone + NADH + 5 H(+)(in) = a quinol + NAD(+) + 4 H(+)(out). NDH-1 shuttles electrons from NADH, via FMN and iron-sulfur (Fe-S) centers, to quinones in the respiratory chain. The immediate electron acceptor for the enzyme in this species is believed to be ubiquinone. Couples the redox reaction to proton translocation (for every two electrons transferred, four hydrogen ions are translocated across the cytoplasmic membrane), and thus conserves the redox energy in a proton gradient. This subunit may bind ubiquinone. The protein is NADH-quinone oxidoreductase subunit H of Cutibacterium acnes (strain DSM 16379 / KPA171202) (Propionibacterium acnes).